The chain runs to 160 residues: Transcription antitermination protein NusB (160 aa).

The protein belongs to the NusB family.

In terms of biological role, involved in transcription antitermination. Required for transcription of ribosomal RNA (rRNA) genes. Binds specifically to the boxA antiterminator sequence of the ribosomal RNA (rrn) operons. In Rhizobium etli (strain ATCC 51251 / DSM 11541 / JCM 21823 / NBRC 15573 / CFN 42), this protein is Transcription antitermination protein NusB.